A 264-amino-acid chain; its full sequence is MNKILDQIRTEHPLVICYTNDVVKNFTANGLLSLGASPTMSEAPQEAEDFYPVAGSVLINIGTLTKHHEHAMLENAKIANETETPLVFDPVAVGASKYRKDFCKYFLKKIKPTVIKGNASEILALIDDTATMKGTDSADNLDVVDIAEKAYKEYQTAIILTGETDVIVQDNKVVKLSNGSHFLAKITGAGCLLGAVVGAFLFRNTHPSIETLIEAVSVYNIAAERAEQLSDSKGPGTFLTQFIDALYRIDSDAVAENCNLEEVK.

Methionine 40 lines the substrate pocket. ATP is bound by residues lysine 116 and threonine 161. Residue glycine 188 coordinates substrate.

This sequence belongs to the Thz kinase family. Mg(2+) is required as a cofactor.

It carries out the reaction 5-(2-hydroxyethyl)-4-methylthiazole + ATP = 4-methyl-5-(2-phosphooxyethyl)-thiazole + ADP + H(+). Its pathway is cofactor biosynthesis; thiamine diphosphate biosynthesis; 4-methyl-5-(2-phosphoethyl)-thiazole from 5-(2-hydroxyethyl)-4-methylthiazole: step 1/1. Catalyzes the phosphorylation of the hydroxyl group of 4-methyl-5-beta-hydroxyethylthiazole (THZ). This chain is Hydroxyethylthiazole kinase, found in Staphylococcus carnosus (strain TM300).